The chain runs to 395 residues: Phosphoglycerate kinase (395 aa).

Residues 21 to 23, Arg36, 59 to 62, Arg113, and Arg146 each bind substrate; these read DLN and HLGR. Residues Lys197, Glu324, and 350–353 contribute to the ATP site; that span reads GGDT.

Belongs to the phosphoglycerate kinase family. Monomer.

The protein resides in the cytoplasm. The enzyme catalyses (2R)-3-phosphoglycerate + ATP = (2R)-3-phospho-glyceroyl phosphate + ADP. The protein operates within carbohydrate degradation; glycolysis; pyruvate from D-glyceraldehyde 3-phosphate: step 2/5. The sequence is that of Phosphoglycerate kinase from Acinetobacter baumannii (strain ATCC 17978 / DSM 105126 / CIP 53.77 / LMG 1025 / NCDC KC755 / 5377).